The primary structure comprises 421 residues: Probable N-acetylgalactosaminyltransferase 8 (421 aa).

Over 1–3 the chain is Cytoplasmic; the sequence is MRR. Residues 4–24 traverse the membrane as a helical; Signal-anchor for type II membrane protein segment; that stretch reads HVVLSIFVFAGIVFAAEEAEK. At 25–421 the chain is on the lumenal side; the sequence is LPKCEHVDPY…ELEPKVHDEL (397 aa). Asparagine 52 and asparagine 58 each carry an N-linked (GlcNAc...) asparagine glycan. Cystine bridges form between cysteine 98–cysteine 331 and cysteine 322–cysteine 399. The interval 106–219 is catalytic subdomain A; sequence SYSTSVVVIH…ERWLEPLLQP (114 aa). Substrate-binding residues include aspartate 147 and arginine 180. Aspartate 203 contacts Mn(2+). Serine 204 is a binding site for substrate. Histidine 205 contacts Mn(2+). The interval 277-339 is catalytic subdomain B; that stretch reads PFNSPAMPGG…PCSRVGHVFR (63 aa). Substrate is bound at residue tryptophan 308. Residue histidine 336 participates in Mn(2+) binding. The substrate site is built by arginine 339 and tyrosine 344. Residues 418–421 carry the Prevents secretion from ER motif; sequence HDEL.

This sequence belongs to the glycosyltransferase 2 family. GalNAc-T subfamily. Requires Mn(2+) as cofactor.

It localises to the golgi apparatus membrane. It participates in protein modification; protein glycosylation. Functionally, potential glycopeptide transferase involved in O-linked oligosaccharide biosynthesis. In contrast to other members of the family, it does not act as a peptide transferase that transfers GalNAc onto serine or threonine residue on peptides that have been tested. Some peptide transferase activity is however not excluded, considering that its appropriate peptide substrate may remain unidentified. The chain is Probable N-acetylgalactosaminyltransferase 8 (gly-8) from Caenorhabditis elegans.